Consider the following 72-residue polypeptide: Translation initiation factor IF-1 (72 aa).

In terms of domain architecture, S1-like spans 1–72; it reads MAKDDVIEVE…TRGRITYRYK (72 aa). Tyr-60 carries the phosphotyrosine modification.

This sequence belongs to the IF-1 family. Component of the 30S ribosomal translation pre-initiation complex which assembles on the 30S ribosome in the order IF-2 and IF-3, IF-1 and N-formylmethionyl-tRNA(fMet); mRNA recruitment can occur at any time during PIC assembly.

It is found in the cytoplasm. One of the essential components for the initiation of protein synthesis. Stabilizes the binding of IF-2 and IF-3 on the 30S subunit to which N-formylmethionyl-tRNA(fMet) subsequently binds. Helps modulate mRNA selection, yielding the 30S pre-initiation complex (PIC). Upon addition of the 50S ribosomal subunit IF-1, IF-2 and IF-3 are released leaving the mature 70S translation initiation complex. In Geobacillus kaustophilus (strain HTA426), this protein is Translation initiation factor IF-1.